A 400-amino-acid polypeptide reads, in one-letter code: Chorismate synthase (400 aa).

NADP(+)-binding residues include Arg-40 and Arg-46. FMN-binding positions include 135–137 (RAS), 257–258 (QA), Gly-301, 316–320 (KPIST), and Arg-342.

The protein belongs to the chorismate synthase family. In terms of assembly, homotetramer. FMNH2 serves as cofactor.

The enzyme catalyses 5-O-(1-carboxyvinyl)-3-phosphoshikimate = chorismate + phosphate. The protein operates within metabolic intermediate biosynthesis; chorismate biosynthesis; chorismate from D-erythrose 4-phosphate and phosphoenolpyruvate: step 7/7. In terms of biological role, catalyzes the anti-1,4-elimination of the C-3 phosphate and the C-6 proR hydrogen from 5-enolpyruvylshikimate-3-phosphate (EPSP) to yield chorismate, which is the branch point compound that serves as the starting substrate for the three terminal pathways of aromatic amino acid biosynthesis. This reaction introduces a second double bond into the aromatic ring system. The chain is Chorismate synthase from Tropheryma whipplei (strain TW08/27) (Whipple's bacillus).